We begin with the raw amino-acid sequence, 396 residues long: Elongation factor Tu (396 aa).

Positions 10-206 constitute a tr-type G domain; that stretch reads KPHVNIGTIG…ACDTYIPAPV (197 aa). Positions 19-26 are G1; it reads GHVDHGKT. GTP is bound at residue 19-26; it reads GHVDHGKT. Mg(2+) is bound at residue T26. The tract at residues 60–64 is G2; sequence GITIS. Residues 81–84 form a G3 region; it reads DCPG. Residues 81 to 85 and 136 to 139 contribute to the GTP site; these read DCPGH and NKVD. Positions 136-139 are G4; that stretch reads NKVD. The interval 174-176 is G5; sequence SAL.

The protein belongs to the TRAFAC class translation factor GTPase superfamily. Classic translation factor GTPase family. EF-Tu/EF-1A subfamily. As to quaternary structure, monomer.

It localises to the cytoplasm. It carries out the reaction GTP + H2O = GDP + phosphate + H(+). Functionally, GTP hydrolase that promotes the GTP-dependent binding of aminoacyl-tRNA to the A-site of ribosomes during protein biosynthesis. The polypeptide is Elongation factor Tu (Bdellovibrio bacteriovorus (strain ATCC 15356 / DSM 50701 / NCIMB 9529 / HD100)).